The sequence spans 962 residues: Thrombospondin-3a (962 aa).

An N-terminal signal peptide occupies residues 1-23 (MEQMFVHIWVSLVVLMSVWSAQS). Residues 24-196 (DKKQDVPVID…MDTLKLALGG (173 aa)) enclose the Laminin G-like domain. Positions 277–318 (PRSRCQPNPCFKGVSCMETFEYPGYRCGPCPDGMTGNGTHCQ) constitute an EGF-like 1 domain. Disulfide bonds link cysteine 281-cysteine 292, cysteine 286-cysteine 303, cysteine 306-cysteine 317, cysteine 323-cysteine 335, cysteine 329-cysteine 344, cysteine 347-cysteine 371, cysteine 377-cysteine 390, cysteine 384-cysteine 399, cysteine 402-cysteine 414, cysteine 420-cysteine 434, cysteine 428-cysteine 444, cysteine 446-cysteine 457, cysteine 473-cysteine 480, cysteine 485-cysteine 505, cysteine 521-cysteine 541, cysteine 544-cysteine 564, cysteine 580-cysteine 600, cysteine 603-cysteine 623, cysteine 641-cysteine 661, and cysteine 684-cysteine 704. N-linked (GlcNAc...) asparagine glycosylation occurs at asparagine 313. The EGF-like 2; calcium-binding domain occupies 319 to 358 (DIDECSEAQPCYTPGACVNTARGFTCESCPPGMWGPPLSG). Positions 373 to 412 (DIDECVDLANACTPNSVCINIIGSFRCGQCKTGYVGNQTA) constitute an EGF-like 3; calcium-binding domain. N-linked (GlcNAc...) asparagine glycosylation is present at asparagine 409. The region spanning 416 to 458 (PRKSCSSLSFNPCDANAHCVMQRNGDVSCACNVGWAGNGHTCG) is the EGF-like 4 domain. 8 TSP type-3 repeats span residues 459–493 (KDTDIDGYPDRSLPCMDNHKHCRQDNCVYTPNSGQ), 494–529 (EDADNDGIGDQCDEDADGDGIKNVEDNCRLVSNKDQ), 530–552 (QNSDTDSFGDACDNCPTVPNIDQ), 553–588 (KDTDSNGEGDACDDDIDGDGIQNVLDNCPKVPNPMQ), 589–611 (TDRDRDGVGDACDSCPEISNPMQ), 612–649 (TDVDNDLVGDVCDTNQDTDGDGHQDTRDNCPDIPNSSQ), 650–692 (LDSD…NPNQ), and 693–728 (KDSDSNGVGDVCENDFDNDSVMDLVDVCPESAEVTL). The tract at residues 548–704 (PNIDQKDTDS…SDSNGVGDVC (157 aa)) is disordered. Positions 557–570 (SNGEGDACDDDIDG) are enriched in acidic residues. A compositionally biased stretch (basic and acidic residues) spans 631–641 (GDGHQDTRDNC). N-linked (GlcNAc...) asparagine glycosylation occurs at asparagine 646. The segment covering 652–669 (SDNDGIGDDCDEDDDNDG) has biased composition (acidic residues). Asparagine 710 carries N-linked (GlcNAc...) asparagine glycosylation. A disulfide bridge links cysteine 720 with cysteine 941. The TSP C-terminal domain maps to 732–946 (RAYQTVILDP…LRYRCNDTVP (215 aa)). N-linked (GlcNAc...) asparagine glycosylation occurs at asparagine 942.

Belongs to the thrombospondin family. In terms of assembly, oligomer; disulfide-linked.

In terms of biological role, adhesive glycoprotein that mediates cell-to-cell and cell-to-matrix interactions. Can bind to fibrinogen, fibronectin, laminin and type V collagen. This is Thrombospondin-3a (thbs3a) from Danio rerio (Zebrafish).